Consider the following 509-residue polypeptide: Subtelomeric hrmA-associated cluster protein AFUA_5G14880 (509 aa).

In terms of biological role, part of the subtelomeric hrmA-associated cluster (HAC) containing genes that alter the hyphal surface (such as reduced total chitin or increased beta-glucan exposure) and perturb inter-hyphal interactions within the developing biofilms, resulting in a loss of vertically aligned polarized growing filaments. Consequently, this hypoxia-typic morphotype (called H-MORPH) with altered biofilm architecture leads to increased hypoxia fitness, increased host inflammation, rapid disease progression, and mortality in a murine model of invasive aspergillosis. The protein is Subtelomeric hrmA-associated cluster protein AFUA_5G14880 of Aspergillus fumigatus (strain ATCC MYA-4609 / CBS 101355 / FGSC A1100 / Af293) (Neosartorya fumigata).